Reading from the N-terminus, the 417-residue chain is NADH-quinone oxidoreductase subunit D (417 aa).

It belongs to the complex I 49 kDa subunit family. NDH-1 is composed of 14 different subunits. Subunits NuoB, C, D, E, F, and G constitute the peripheral sector of the complex.

It is found in the cell inner membrane. It carries out the reaction a quinone + NADH + 5 H(+)(in) = a quinol + NAD(+) + 4 H(+)(out). Functionally, NDH-1 shuttles electrons from NADH, via FMN and iron-sulfur (Fe-S) centers, to quinones in the respiratory chain. The immediate electron acceptor for the enzyme in this species is believed to be ubiquinone. Couples the redox reaction to proton translocation (for every two electrons transferred, four hydrogen ions are translocated across the cytoplasmic membrane), and thus conserves the redox energy in a proton gradient. The polypeptide is NADH-quinone oxidoreductase subunit D (Janthinobacterium sp. (strain Marseille) (Minibacterium massiliensis)).